The sequence spans 210 residues: Orotate phosphoribosyltransferase (210 aa).

Residues Arg-97, Lys-101, His-103, and 123–131 contribute to the 5-phospho-alpha-D-ribose 1-diphosphate site; that span reads EDLISTGGS. Ser-127 contributes to the orotate binding site.

This sequence belongs to the purine/pyrimidine phosphoribosyltransferase family. PyrE subfamily. Homodimer. The cofactor is Mg(2+).

The catalysed reaction is orotidine 5'-phosphate + diphosphate = orotate + 5-phospho-alpha-D-ribose 1-diphosphate. Its pathway is pyrimidine metabolism; UMP biosynthesis via de novo pathway; UMP from orotate: step 1/2. Functionally, catalyzes the transfer of a ribosyl phosphate group from 5-phosphoribose 1-diphosphate to orotate, leading to the formation of orotidine monophosphate (OMP). This is Orotate phosphoribosyltransferase from Enterococcus faecalis (strain ATCC 700802 / V583).